The sequence spans 198 residues: Endonuclease V (198 aa).

Mg(2+)-binding residues include Asp38 and Asp101.

It belongs to the endonuclease V family. Requires Mg(2+) as cofactor.

It is found in the cytoplasm. The catalysed reaction is Endonucleolytic cleavage at apurinic or apyrimidinic sites to products with a 5'-phosphate.. In terms of biological role, DNA repair enzyme involved in the repair of deaminated bases. Selectively cleaves double-stranded DNA at the second phosphodiester bond 3' to a deoxyinosine leaving behind the intact lesion on the nicked DNA. This chain is Endonuclease V, found in Saccharolobus islandicus (strain M.16.4 / Kamchatka #3) (Sulfolobus islandicus).